Reading from the N-terminus, the 308-residue chain is Glutaminase (308 aa).

Substrate contacts are provided by Ser66, Asn117, Glu161, Asn168, Tyr192, Tyr244, and Val262.

The protein belongs to the glutaminase family. As to quaternary structure, homotetramer.

It carries out the reaction L-glutamine + H2O = L-glutamate + NH4(+). The polypeptide is Glutaminase (Salmonella arizonae (strain ATCC BAA-731 / CDC346-86 / RSK2980)).